The sequence spans 144 residues: Large ribosomal subunit protein uL16 (144 aa).

It belongs to the universal ribosomal protein uL16 family. Part of the 50S ribosomal subunit.

Functionally, binds 23S rRNA and is also seen to make contacts with the A and possibly P site tRNAs. This chain is Large ribosomal subunit protein uL16, found in Thermoanaerobacter pseudethanolicus (strain ATCC 33223 / 39E) (Clostridium thermohydrosulfuricum).